The chain runs to 418 residues: Glutamyl-tRNA reductase (418 aa).

Residues 49–52 (TCNR), S109, 114–116 (EPQ), and Q120 each bind substrate. Catalysis depends on C50, which acts as the Nucleophile. 189 to 194 (GAGETI) contributes to the NADP(+) binding site.

This sequence belongs to the glutamyl-tRNA reductase family. In terms of assembly, homodimer.

It carries out the reaction (S)-4-amino-5-oxopentanoate + tRNA(Glu) + NADP(+) = L-glutamyl-tRNA(Glu) + NADPH + H(+). It functions in the pathway porphyrin-containing compound metabolism; protoporphyrin-IX biosynthesis; 5-aminolevulinate from L-glutamyl-tRNA(Glu): step 1/2. Its function is as follows. Catalyzes the NADPH-dependent reduction of glutamyl-tRNA(Glu) to glutamate 1-semialdehyde (GSA). This is Glutamyl-tRNA reductase from Escherichia coli O7:K1 (strain IAI39 / ExPEC).